The chain runs to 536 residues: Probable cytochrome P450 318a1 (536 aa).

The segment covering 439-457 has biased composition (basic and acidic residues); sequence EEEQLSKGHNDSGSGEKRR. Positions 439-460 are disordered; that stretch reads EEEQLSKGHNDSGSGEKRRQRD. Cysteine 477 contributes to the heme binding site.

Belongs to the cytochrome P450 family. Requires heme as cofactor.

The protein localises to the endoplasmic reticulum membrane. It is found in the microsome membrane. Its function is as follows. May be involved in the metabolism of insect hormones and in the breakdown of synthetic insecticides. The protein is Probable cytochrome P450 318a1 (Cyp318a1) of Drosophila melanogaster (Fruit fly).